Consider the following 344-residue polypeptide: 4-hydroxy-3-methylbut-2-en-1-yl diphosphate synthase (flavodoxin) (344 aa).

Positions 253, 256, 288, and 295 each coordinate [4Fe-4S] cluster.

This sequence belongs to the IspG family. The cofactor is [4Fe-4S] cluster.

It carries out the reaction (2E)-4-hydroxy-3-methylbut-2-enyl diphosphate + oxidized [flavodoxin] + H2O + 2 H(+) = 2-C-methyl-D-erythritol 2,4-cyclic diphosphate + reduced [flavodoxin]. Its pathway is isoprenoid biosynthesis; isopentenyl diphosphate biosynthesis via DXP pathway; isopentenyl diphosphate from 1-deoxy-D-xylulose 5-phosphate: step 5/6. Converts 2C-methyl-D-erythritol 2,4-cyclodiphosphate (ME-2,4cPP) into 1-hydroxy-2-methyl-2-(E)-butenyl 4-diphosphate. The polypeptide is 4-hydroxy-3-methylbut-2-en-1-yl diphosphate synthase (flavodoxin) (Thermotoga petrophila (strain ATCC BAA-488 / DSM 13995 / JCM 10881 / RKU-1)).